A 129-amino-acid chain; its full sequence is Glycine cleavage system H protein (129 aa).

Positions 24-106 constitute a Lipoyl-binding domain; that stretch reads IAVIGISAYA…YEQGWLLKVQ (83 aa). Lysine 65 is modified (N6-lipoyllysine).

The protein belongs to the GcvH family. The glycine cleavage system is composed of four proteins: P, T, L and H. Requires (R)-lipoate as cofactor.

Functionally, the glycine cleavage system catalyzes the degradation of glycine. The H protein shuttles the methylamine group of glycine from the P protein to the T protein. In Synechococcus elongatus (strain ATCC 33912 / PCC 7942 / FACHB-805) (Anacystis nidulans R2), this protein is Glycine cleavage system H protein.